A 586-amino-acid polypeptide reads, in one-letter code: Arginine--tRNA ligase (586 aa).

The short motif at 133 to 143 (ANPTGPLNIVS) is the 'HIGH' region element.

Belongs to the class-I aminoacyl-tRNA synthetase family. As to quaternary structure, monomer.

The protein resides in the cytoplasm. It carries out the reaction tRNA(Arg) + L-arginine + ATP = L-arginyl-tRNA(Arg) + AMP + diphosphate. This chain is Arginine--tRNA ligase, found in Leptospira interrogans serogroup Icterohaemorrhagiae serovar copenhageni (strain Fiocruz L1-130).